Consider the following 292-residue polypeptide: Pantothenate synthetase (292 aa).

Residue 32–39 (MGFLHEGH) coordinates ATP. Residue H39 is the Proton donor of the active site. A (R)-pantoate-binding site is contributed by Q63. Q63 provides a ligand contact to beta-alanine. Position 150–153 (150–153 (GEKD)) interacts with ATP. Q156 is a (R)-pantoate binding site. ATP is bound by residues V179 and 187–190 (MSSR).

This sequence belongs to the pantothenate synthetase family. Homodimer.

The protein resides in the cytoplasm. The enzyme catalyses (R)-pantoate + beta-alanine + ATP = (R)-pantothenate + AMP + diphosphate + H(+). It functions in the pathway cofactor biosynthesis; (R)-pantothenate biosynthesis; (R)-pantothenate from (R)-pantoate and beta-alanine: step 1/1. Catalyzes the condensation of pantoate with beta-alanine in an ATP-dependent reaction via a pantoyl-adenylate intermediate. The sequence is that of Pantothenate synthetase from Myxococcus xanthus (strain DK1622).